A 247-amino-acid polypeptide reads, in one-letter code: Adenosylcobinamide-GDP ribazoletransferase (247 aa).

Transmembrane regions (helical) follow at residues 31–51 (ILFYPLVGLIIGGILFLVTCI), 55–75 (LPALLLAAIVLALWIWLTGGL), 109–129 (IGVLSLVIICLLKFALVYVLI), 135–155 (LFLICIPILGRVVPSILFLTT), 183–203 (VLLLPLYWGWQGLIAIIGFLI), and 227–247 (AIEIGETVLMFTFVVSYFYLV).

The protein belongs to the CobS family. It depends on Mg(2+) as a cofactor.

Its subcellular location is the cell inner membrane. It catalyses the reaction alpha-ribazole + adenosylcob(III)inamide-GDP = adenosylcob(III)alamin + GMP + H(+). The catalysed reaction is alpha-ribazole 5'-phosphate + adenosylcob(III)inamide-GDP = adenosylcob(III)alamin 5'-phosphate + GMP + H(+). The protein operates within cofactor biosynthesis; adenosylcobalamin biosynthesis; adenosylcobalamin from cob(II)yrinate a,c-diamide: step 7/7. Joins adenosylcobinamide-GDP and alpha-ribazole to generate adenosylcobalamin (Ado-cobalamin). Also synthesizes adenosylcobalamin 5'-phosphate from adenosylcobinamide-GDP and alpha-ribazole 5'-phosphate. The chain is Adenosylcobinamide-GDP ribazoletransferase from Acinetobacter baumannii (strain ATCC 17978 / DSM 105126 / CIP 53.77 / LMG 1025 / NCDC KC755 / 5377).